Here is a 395-residue protein sequence, read N- to C-terminus: Phosphoglycerate kinase (395 aa).

Residues 22–24 (DFN), R38, 61–64 (HLGR), R119, and R152 contribute to the substrate site. ATP contacts are provided by residues K203, G294, E325, and 351 to 354 (GGDT).

This sequence belongs to the phosphoglycerate kinase family. Monomer.

The protein localises to the cytoplasm. It carries out the reaction (2R)-3-phosphoglycerate + ATP = (2R)-3-phospho-glyceroyl phosphate + ADP. Its pathway is carbohydrate degradation; glycolysis; pyruvate from D-glyceraldehyde 3-phosphate: step 2/5. The polypeptide is Phosphoglycerate kinase (Hydrogenobaculum sp. (strain Y04AAS1)).